We begin with the raw amino-acid sequence, 160 residues long: Ribonuclease H (160 aa).

Residues 5–146 (PGGLVEIWTD…VDQLATAARE (142 aa)) form the RNase H type-1 domain. Mg(2+) contacts are provided by aspartate 14, glutamate 52, aspartate 74, and aspartate 138.

The protein belongs to the RNase H family. As to quaternary structure, monomer. It depends on Mg(2+) as a cofactor.

The protein localises to the cytoplasm. The enzyme catalyses Endonucleolytic cleavage to 5'-phosphomonoester.. Functionally, endonuclease that specifically degrades the RNA of RNA-DNA hybrids. The protein is Ribonuclease H of Acidiphilium cryptum (strain JF-5).